The primary structure comprises 671 residues: MSQIPSPNDPASTGAAPSSAAVPAGPSATPAPSPTAGFSLPGHRPPPSGKALAALAVGALGVVYGDIGTSPLYSLKECFGGPHGVRPTDANVLGVLSLVFWAMTFVVTFKYMSFVMRADNRGEGGILALMALVGKTETTRLGRRMLLMLGLFGAALLYGDGIITPAISVLGAVEGVAVAAPAMERAVVPATVVILVFLFLFQKQGTAKVGAVFGPVMLVWFATIAVLGVRGILHDPTILRALLPTHGLSFFARNGWHGFLVLGGVVLVITGGEALYADMGHFGKRPIRVAWLGLAMPALLLNYLGQGALLLHDPGAARNPFYLLAPEWALYPTIAIATAAAIVASQALISGAYSLTQQAIQLGYSPRVTIRHTSQREIGQIYLPEVNWMLGTACLALVLGFQTSSRLASAYGIAVTGTMIVTTLLFHRVMRDRWGWARWKAWPLTVLFLTVDAAFFLANVVKFRDGGWFPIAAAALVFTLMSTWKRGRDALALMLKDAGLPLDLFMADVARRKVQRVAGTAVFMTSNPGGVPPVLLHHLKHNKVLHERVVLVSILAHEIPFVNEPERVNARELGSGFFQVIAHYGFMETPDVPALLDSLPRRELAGPRLTIVPMETTYFLGRETLLANGPSTIPTWRKRLFIVMARNAQTASAFFGLPPNRVVEMGAQIQL.

The disordered stretch occupies residues methionine 1–histidine 43. Residues proline 10 to glycine 37 show a composition bias toward low complexity. A run of 12 helical transmembrane segments spans residues leucine 52–leucine 72, valine 92–methionine 112, leucine 147–isoleucine 167, proline 181–phenylalanine 201, valine 209–valine 229, glycine 255–leucine 275, tryptophan 291–leucine 311, leucine 323–valine 343, isoleucine 381–phenylalanine 401, leucine 407–histidine 427, alanine 441–valine 461, and aspartate 465–lysine 485.

This sequence belongs to the HAK/KUP transporter (TC 2.A.72) family.

The protein resides in the cell inner membrane. The enzyme catalyses K(+)(in) + H(+)(in) = K(+)(out) + H(+)(out). Its function is as follows. Transport of potassium into the cell. Likely operates as a K(+):H(+) symporter. This is Probable potassium transport system protein Kup from Anaeromyxobacter dehalogenans (strain 2CP-1 / ATCC BAA-258).